The sequence spans 310 residues: Carbamate kinase (310 aa).

It belongs to the carbamate kinase family.

The protein resides in the cytoplasm. The enzyme catalyses hydrogencarbonate + NH4(+) + ATP = carbamoyl phosphate + ADP + H2O + H(+). It functions in the pathway metabolic intermediate metabolism; carbamoyl phosphate degradation; CO(2) and NH(3) from carbamoyl phosphate: step 1/1. The chain is Carbamate kinase (arcC) from Staphylococcus epidermidis (strain ATCC 35984 / DSM 28319 / BCRC 17069 / CCUG 31568 / BM 3577 / RP62A).